We begin with the raw amino-acid sequence, 114 residues long: Cuticle protein AMP5 (114 aa).

A Pyrrolidone carboxylic acid modification is found at glutamine 1. In terms of domain architecture, Chitin-binding type R&amp;R spans 18 to 83; that stretch reads AGNYFYEFET…VDSPLIPVAP (66 aa).

Arthrodial membrane.

This chain is Cuticle protein AMP5, found in Homarus americanus (American lobster).